The chain runs to 1320 residues: Poly [ADP-ribose] polymerase tankyrase-1 (1320 aa).

The span at 1–15 (MAASRRSQHHHHHHQ) shows a compositional bias: basic residues. Disordered regions lie at residues 1–88 (MAAS…DGAV) and 111–152 (AGGG…AAGV). Residues 25–46 (SAPPPPPPPPLSPGLAPGPTPA) show a composition bias toward pro residues. Positions 69-82 (DGSRDPPDRPRSPD) are enriched in basic and acidic residues. Residues 120–152 (NSASSASSPTSSSSSSPSSPGSSLAESPEAAGV) are compositionally biased toward low complexity. ANK repeat units lie at residues 174–202 (GALRELLEACRNGDVSRVKRLVDAANVNA), 208–237 (RKSSPLHFAAGFGRKDVVEHLLQMGANVHA), 241–270 (GGLIPLHNACSFGHAEVVSLLLCQGADPNA), 274–303 (WNYTPLHEAAIKGKIDVCIVLLQHGADPNI), 361–390 (RKSTPLHLAAGYNRVRIVQLLLQHGADVHA), 394–423 (GGLVPLHNACSYGHYEVTELLLKHGACVNA), 427–456 (WQFTPLHEAASKNRVEVCSLLLSHGADPTL), 514–546 (SHETALHCAVASLHPKRKQVAELLLRKGANVNE), 550–579 (DFMTPLHVAAERAHNDVMEVLHKHGAKMNA), 583–612 (LGQTALHRAALAGHLQTCRLLLSYGSDPSI), 676–705 (RHSTPLHFAAGYNRVSVVEYLLHHGADVHA), 709–738 (GGLVPLHNACSYGHYEVAELLVRHGASVNV), 742–771 (WKFTPLHEAAAKGKYEICKLLLKHGADPTK), 775–803 (DGNTPLDLVKEGDTDIQDLLRGDAALLDA), 829–858 (RNSTPLHLAAGYNNLEVAEYLLEHGADVNA), 862–891 (GGLIPLHNAASYGHVDIAALLIKYNTCVNA), 895–924 (WAFTPLHEAAQKGRTQLCALLLAHGADPTM), and 928–957 (EGQTPLDLATADDIRALLIDAMPPEALPTC). The 64-residue stretch at 1019 to 1082 (GLDMNISQFL…IKGVERLLGG (64 aa)) folds into the SAM domain. A PARP catalytic domain is found at 1105–1310 (APEDKEYQSV…YQIMKPEAPS (206 aa)). The Zn(2+) site is built by Cys-1227, His-1230, Cys-1235, and Cys-1238.

The protein belongs to the ARTD/PARP family. Oligomerizes and associates with TNKS2. Interacts with the cytoplasmic domain of LNPEP/Otase in SLC2A4/GLUT4-vesicles. Binds to the N-terminus of telomeric TERF1 via the ANK repeats. Found in a complex with POT1; TERF1 and TINF2. Interacts with AXIN1. Interacts with AXIN2. Interacts with BLZF1 and CASC3. Interacts with NUMA1. In terms of processing, phosphorylated on serine residues by MAPK kinases upon insulin stimulation. Phosphorylated during mitosis. Ubiquitinated by RNF146 when auto-poly-ADP-ribosylated, leading to its degradation. Post-translationally, ADP-ribosylated (-auto). Poly-ADP-ribosylated protein is recognized by RNF146, followed by ubiquitination.

It is found in the cytoplasm. It localises to the golgi apparatus membrane. The protein resides in the cytoskeleton. The protein localises to the microtubule organizing center. Its subcellular location is the centrosome. It is found in the nucleus. It localises to the nuclear pore complex. The protein resides in the chromosome. The protein localises to the telomere. Its subcellular location is the spindle pole. It carries out the reaction NAD(+) + (ADP-D-ribosyl)n-acceptor = nicotinamide + (ADP-D-ribosyl)n+1-acceptor + H(+).. The enzyme catalyses L-aspartyl-[protein] + NAD(+) = 4-O-(ADP-D-ribosyl)-L-aspartyl-[protein] + nicotinamide. The catalysed reaction is L-glutamyl-[protein] + NAD(+) = 5-O-(ADP-D-ribosyl)-L-glutamyl-[protein] + nicotinamide. In terms of biological role, poly-ADP-ribosyltransferase involved in various processes such as Wnt signaling pathway, telomere length and vesicle trafficking. Acts as an activator of the Wnt signaling pathway by mediating poly-ADP-ribosylation (PARsylation) of AXIN1 and AXIN2, 2 key components of the beta-catenin destruction complex: poly-ADP-ribosylated target proteins are recognized by RNF146, which mediates their ubiquitination and subsequent degradation. Also mediates PARsylation of BLZF1 and CASC3, followed by recruitment of RNF146 and subsequent ubiquitination. Mediates PARsylation of TERF1, thereby contributing to the regulation of telomere length. Involved in centrosome maturation during prometaphase by mediating PARsylation of HEPACAM2/MIKI. May also regulate vesicle trafficking and modulate the subcellular distribution of SLC2A4/GLUT4-vesicles. May be involved in spindle pole assembly through PARsylation of NUMA1. Stimulates 26S proteasome activity. This chain is Poly [ADP-ribose] polymerase tankyrase-1 (Tnks), found in Mus musculus (Mouse).